The sequence spans 164 residues: Urease subunit beta (164 aa).

2 stretches are compositionally biased toward polar residues: residues Met-1–Ala-10 and Thr-20–Tyr-30. The segment at Met-1–Tyr-30 is disordered.

The protein belongs to the urease beta subunit family. Heterotrimer of UreA (gamma), UreB (beta) and UreC (alpha) subunits. Three heterotrimers associate to form the active enzyme.

It is found in the cytoplasm. It catalyses the reaction urea + 2 H2O + H(+) = hydrogencarbonate + 2 NH4(+). Its pathway is nitrogen metabolism; urea degradation; CO(2) and NH(3) from urea (urease route): step 1/1. Expression of the urease operon increases the likelihood of bacterial survival by contributing to acid resistance in vitro and in vivo in BALB/c mice. Y.enterocolitica enters the body via an oral path and must survive the acidic stomach before being able to colonize the intestinal mucosa. This chain is Urease subunit beta, found in Yersinia enterocolitica.